Here is a 511-residue protein sequence, read N- to C-terminus: Adenosine deaminase 2 (511 aa).

The signal sequence occupies residues 1-29 (MLVDGPSEWPALRFLLLAVAMSFFGSALS). Residues 30 to 100 (IDETRAHLLL…HLIERSQVFN (71 aa)) form a dimerization region. 2 residues coordinate Zn(2+): His-112 and His-114. Asp-115 provides a ligand contact to substrate. Asn-127 is a glycosylation site (N-linked (GlcNAc...) asparagine). Residues 127–185 (NVTYRPHCHICFTPKGIMQFRFAHPTPRTSEKCSKWILLEDYRKRVQNVTEFDDSLLRN) are PRB domain. Cys-137 and Cys-159 are joined by a disulfide. Asn-174 and Asn-185 each carry an N-linked (GlcNAc...) asparagine glycan. Substrate contacts are provided by residues 204 to 211 (WSKFETIF), His-293, and Gly-326. A Zn(2+)-binding site is contributed by His-356. Catalysis depends on Glu-359, which acts as the Proton donor. An N-linked (GlcNAc...) asparagine glycan is attached at Asn-378. His-384 serves as the catalytic Proton acceptor. Zn(2+) is bound at residue Asp-441. Position 442 (Asp-442) interacts with substrate.

The protein belongs to the metallo-dependent hydrolases superfamily. Adenosine and AMP deaminases family. ADGF subfamily. Homodimer. Interacts with adenosine receptors. Binds heparin. The cofactor is Zn(2+).

The protein resides in the secreted. The enzyme catalyses adenosine + H2O + H(+) = inosine + NH4(+). In terms of biological role, adenosine deaminase that may contribute to the degradation of extracellular adenosine, a signaling molecule that controls a variety of cellular responses. Requires elevated adenosine levels for optimal enzyme activity. Binds to cell surfaces via proteoglycans and may play a role in the regulation of cell proliferation and differentiation, independently of its enzyme activity. This chain is Adenosine deaminase 2, found in Pongo abelii (Sumatran orangutan).